The chain runs to 449 residues: Glucose-6-phosphate isomerase (449 aa).

E291 (proton donor) is an active-site residue. Catalysis depends on residues H312 and K426.

It belongs to the GPI family.

Its subcellular location is the cytoplasm. The catalysed reaction is alpha-D-glucose 6-phosphate = beta-D-fructose 6-phosphate. Its pathway is carbohydrate biosynthesis; gluconeogenesis. It participates in carbohydrate degradation; glycolysis; D-glyceraldehyde 3-phosphate and glycerone phosphate from D-glucose: step 2/4. Catalyzes the reversible isomerization of glucose-6-phosphate to fructose-6-phosphate. In Streptococcus pneumoniae (strain CGSP14), this protein is Glucose-6-phosphate isomerase.